Here is a 215-residue protein sequence, read N- to C-terminus: NAD(P)H-hydrate epimerase (215 aa).

Residues 8-212 form the YjeF N-terminal domain; the sequence is MYNIENKGHD…KIGIPPEAEE (205 aa). 57-61 is a binding site for (6S)-NADPHX; it reads NNGGD. K(+) contacts are provided by asparagine 58 and aspartate 124. Residues 128–134, tyrosine 139, and aspartate 157 each bind (6S)-NADPHX; that span reads GTGISGE. Serine 160 contributes to the K(+) binding site.

Belongs to the NnrE/AIBP family. The cofactor is K(+).

The catalysed reaction is (6R)-NADHX = (6S)-NADHX. It catalyses the reaction (6R)-NADPHX = (6S)-NADPHX. Its function is as follows. Catalyzes the epimerization of the S- and R-forms of NAD(P)HX, a damaged form of NAD(P)H that is a result of enzymatic or heat-dependent hydration. This is a prerequisite for the S-specific NAD(P)H-hydrate dehydratase to allow the repair of both epimers of NAD(P)HX. The protein is NAD(P)H-hydrate epimerase of Nitrosopumilus maritimus (strain SCM1).